Here is a 299-residue protein sequence, read N- to C-terminus: Probable arylamine N-acetyltransferase 2 (299 aa).

Residue cysteine 75 is the Acyl-thioester intermediate of the active site. Residues histidine 115 and aspartate 130 contribute to the active site.

It belongs to the arylamine N-acetyltransferase family.

The enzyme catalyses an arylamine + acetyl-CoA = an N-acetylarylamine + CoA. The chain is Probable arylamine N-acetyltransferase 2 from Dictyostelium discoideum (Social amoeba).